Reading from the N-terminus, the 214-residue chain is MTISANKRSVMSLFSDKNDIYSHQVRIVLAEKGVPYELENINPNTISEDFLELNPYANIPTLVDRDLVLFNSRIIMEYLDERFPHPPLMPVYPVLRGKSRLTMHRIEQDWYSLIDIVNKNPESKEAKKALSQLREEMLALGSVFAATSYFMSDEFSLVDCYIAPLLWRMHNLGVQFTGAGGKAIKAYMTKVFQRDSFSQSIGGSAPKHLMDDKE.

Positions 9 to 87 (SVMSLFSDKN…YLDERFPHPP (79 aa)) constitute a GST N-terminal domain. Positions 92–209 (YPVLRGKSRL…SIGGSAPKHL (118 aa)) constitute a GST C-terminal domain.

This sequence belongs to the GST superfamily. HSP26 family.

In terms of biological role, forms an equimolar complex with the RNA polymerase holoenzyme (RNAP) but not with the core enzyme. The polypeptide is Stringent starvation protein A homolog (sspA) (Haemophilus ducreyi (strain 35000HP / ATCC 700724)).